A 127-amino-acid polypeptide reads, in one-letter code: Small ribosomal subunit protein bS6 (127 aa).

Positions 104–127 (QGAEKGKSSRKEKVAAEAEASEEA) are disordered. The span at 107 to 119 (EKGKSSRKEKVAA) shows a compositional bias: basic and acidic residues.

This sequence belongs to the bacterial ribosomal protein bS6 family.

In terms of biological role, binds together with bS18 to 16S ribosomal RNA. The polypeptide is Small ribosomal subunit protein bS6 (Coxiella burnetii (strain CbuG_Q212) (Coxiella burnetii (strain Q212))).